The chain runs to 98 residues: MKLTSHDIIRKPVITEKSMAAMAEKKYTFMVHVNANKSQVKRAVEEVFDVKVKDVNTINGLGKTKRMGVHVGKRSDYKKAIVTLTEESKAIEFFDGLQ.

This sequence belongs to the universal ribosomal protein uL23 family. As to quaternary structure, part of the 50S ribosomal subunit. Contacts protein L29, and trigger factor when it is bound to the ribosome.

Functionally, one of the early assembly proteins it binds 23S rRNA. One of the proteins that surrounds the polypeptide exit tunnel on the outside of the ribosome. Forms the main docking site for trigger factor binding to the ribosome. The sequence is that of Large ribosomal subunit protein uL23 from Clostridium botulinum (strain Eklund 17B / Type B).